A 261-amino-acid polypeptide reads, in one-letter code: Putative diacylated glycolipid transporter LprF (261 aa).

Residues 1–38 (MNGLISQACGSHRPRRPSSLGAVAILIAATLFATVVAG) form the signal peptide. Cys39 carries the N-palmitoyl cysteine lipid modification. The S-diacylglycerol cysteine moiety is linked to residue Cys39. A disordered region spans residues 42-61 (KPTTASSPSPGSPSPEAQQI).

Belongs to the LppX/LprAFG lipoprotein family. As to quaternary structure, monomer. In terms of processing, modified by Lgt on Cys-39 with an S-linked diacylglycerol with a mixture of C16, C18 and C19 fatty acids (palmitic, stearic and tuberculostearic acid respectively), signal peptide is removed by LspA, modified by Lnt with an amide-linked mixture of C16 and C19 fatty acids.

It localises to the cell membrane. Might be involved in transporting short diacylated glycolipids to the cell outer membrane. Binds glycolipids that contain a diacylated glycerophosphate or a diacylated phosphatidylinositol moiety with C14 and C16 chains (upon overexpression in M.smegmatis; M.smegmatis does not encode this gene). Overexpression in M.smegmatis increases the cell wall glycolipid LAM/LM ratio (lipoarabinomannan/lipomannan), suggesting perhaps this protein is involved in the preferential translocation of diacylated LAM to the outer cell membrane. Overexpressing M.smegmatis cells adhere less well to hexadecane droplets, indicating decrease in the hydrophobicity of the cell surface, and have a slightly increased resistance to the antibiotic ethambutol. This chain is Putative diacylated glycolipid transporter LprF (lprF), found in Mycobacterium bovis (strain ATCC BAA-935 / AF2122/97).